A 312-amino-acid chain; its full sequence is Acetyl-coenzyme A carboxylase carboxyl transferase subunit alpha (312 aa).

The region spanning 36–286 (RLEKEVKSIY…KEYFLDALRT (251 aa)) is the CoA carboxyltransferase C-terminal domain.

Belongs to the AccA family. As to quaternary structure, acetyl-CoA carboxylase is a heterohexamer composed of biotin carboxyl carrier protein (AccB), biotin carboxylase (AccC) and two subunits each of ACCase subunit alpha (AccA) and ACCase subunit beta (AccD).

Its subcellular location is the cytoplasm. The catalysed reaction is N(6)-carboxybiotinyl-L-lysyl-[protein] + acetyl-CoA = N(6)-biotinyl-L-lysyl-[protein] + malonyl-CoA. It functions in the pathway lipid metabolism; malonyl-CoA biosynthesis; malonyl-CoA from acetyl-CoA: step 1/1. Functionally, component of the acetyl coenzyme A carboxylase (ACC) complex. First, biotin carboxylase catalyzes the carboxylation of biotin on its carrier protein (BCCP) and then the CO(2) group is transferred by the carboxyltransferase to acetyl-CoA to form malonyl-CoA. The sequence is that of Acetyl-coenzyme A carboxylase carboxyl transferase subunit alpha from Helicobacter pylori (strain P12).